Here is a 444-residue protein sequence, read N- to C-terminus: Retinoic acid receptor alpha-A (444 aa).

The modulating stretch occupies residues M1 to I71. Residues S35–H46 show a composition bias toward polar residues. A disordered region spans residues S35–P67. Residues S47–I58 show a composition bias toward low complexity. Residues Y72–N147 constitute a DNA-binding region (nuclear receptor). 2 consecutive NR C4-type zinc fingers follow at residues C75–C95 and C111–C130. Residues D148 to P169 are hinge. The NR LBD domain maps to D170–S404. The short motif at P395–N403 is the 9aaTAD element. Residues E402–P444 are disordered.

This sequence belongs to the nuclear hormone receptor family. NR1 subfamily. Heterodimer; with an rxr molecule. Binds DNA preferentially as a rar/rxr heterodimer. As to expression, in the embryo, zygotic expression largely overlaps that of rarab, with high levels in hindbrain, lateral mesoderm and tail bud. In the adult, strong expression in brain and muscle, weaker expression in ovary, liver and digestive tract.

It localises to the nucleus. Receptor for retinoic acid. Retinoic acid receptors bind as heterodimers to their target response elements in response to their ligands, all-trans or 9-cis retinoic acid, and regulate gene expression in various biological processes. The rar/rxr heterodimers bind to the retinoic acid response elements (RARE) composed of tandem 5'-AGGTCA-3' sites known as DR1-DR5. Required for hindbrain patterning. The polypeptide is Retinoic acid receptor alpha-A (Danio rerio (Zebrafish)).